A 276-amino-acid chain; its full sequence is Formamidopyrimidine-DNA glycosylase (276 aa).

Residue Pro-2 is the Schiff-base intermediate with DNA of the active site. Glu-3 (proton donor) is an active-site residue. Lys-58 acts as the Proton donor; for beta-elimination activity in catalysis. DNA-binding residues include His-92, Arg-111, and Arg-153. An FPG-type zinc finger spans residues 238 to 272 (TVYGRERQNCLNCSSTIIKTKHSGRSTFYCRTCQY). Arg-262 (proton donor; for delta-elimination activity) is an active-site residue.

This sequence belongs to the FPG family. As to quaternary structure, monomer. Zn(2+) is required as a cofactor.

It catalyses the reaction Hydrolysis of DNA containing ring-opened 7-methylguanine residues, releasing 2,6-diamino-4-hydroxy-5-(N-methyl)formamidopyrimidine.. It carries out the reaction 2'-deoxyribonucleotide-(2'-deoxyribose 5'-phosphate)-2'-deoxyribonucleotide-DNA = a 3'-end 2'-deoxyribonucleotide-(2,3-dehydro-2,3-deoxyribose 5'-phosphate)-DNA + a 5'-end 5'-phospho-2'-deoxyribonucleoside-DNA + H(+). Functionally, involved in base excision repair of DNA damaged by oxidation or by mutagenic agents. Acts as a DNA glycosylase that recognizes and removes damaged bases. Has a preference for oxidized purines, such as 7,8-dihydro-8-oxoguanine (8-oxoG). Has AP (apurinic/apyrimidinic) lyase activity and introduces nicks in the DNA strand. Cleaves the DNA backbone by beta-delta elimination to generate a single-strand break at the site of the removed base with both 3'- and 5'-phosphates. In Rickettsia felis (strain ATCC VR-1525 / URRWXCal2) (Rickettsia azadi), this protein is Formamidopyrimidine-DNA glycosylase.